The chain runs to 204 residues: Tetraspanin-13 (204 aa).

The Cytoplasmic segment spans residues 1-19 (MVCGGFACSKNCLCALNLL). A helical membrane pass occupies residues 20-40 (YTLVSLLLIGIAAWGIGFGLI). Topologically, residues 41–44 (SSLR) are extracellular. Residues 45-65 (VVGVVIAVGIFLFLIALVGLI) form a helical membrane-spanning segment. Topologically, residues 66 to 72 (GAVKHHQ) are cytoplasmic. Residues 73 to 93 (VLLFFYMIILLLVFIVQFSVS) traverse the membrane as a helical segment. Topologically, residues 94–167 (CACLALNQEQ…IGRYAGEVLR (74 aa)) are extracellular. Residues asparagine 113 and asparagine 137 are each glycosylated (N-linked (GlcNAc...) asparagine). The residue at position 143 (serine 143) is a Phosphoserine. A helical membrane pass occupies residues 168–188 (FVGGIGLFFSFTEILGVWLTY). Residues 189-204 (RYRNQKDPRANPSAFL) are Cytoplasmic-facing.

This sequence belongs to the tetraspanin (TM4SF) family.

Its subcellular location is the membrane. The chain is Tetraspanin-13 (TSPAN13) from Bos taurus (Bovine).